We begin with the raw amino-acid sequence, 173 residues long: Thiol-disulfide oxidoreductase ResA (173 aa).

Residues 10–29 (VIILLILSGAVGFTLYQGYF) traverse the membrane as a helical; Signal-anchor for type II membrane protein segment. The 139-residue stretch at 35–173 (MEIGKEAPNF…LEEYLKKITP (139 aa)) folds into the Thioredoxin domain. Residues Cys-73 and Cys-76 are joined by a disulfide bond.

This sequence belongs to the thioredoxin family. ResA subfamily.

It localises to the cell membrane. Its pathway is protein modification; cytochrome c assembly. Its function is as follows. Thiol-disulfide oxidoreductase which is required in disulfide reduction during c-type cytochrome synthesis. May accept reducing equivalents from CcdA, leading to breakage of disulfide bonds in apocytochrome c; following this reduction heme can be covalently attached. The chain is Thiol-disulfide oxidoreductase ResA from Bacillus cereus (strain ATCC 10987 / NRS 248).